Consider the following 428-residue polypeptide: Hydrolase acrC (428 aa).

Serine 248 is an active-site residue.

It belongs to the AB hydrolase superfamily. FUS2 hydrolase family.

Its pathway is secondary metabolite biosynthesis. Its function is as follows. Hydrolase; part of the cluster that mediates the biosynthesis of acurin A, a highly reduced polyketide coupled to a serine via a peptide bond. The activities of the highly reducing polyketide synthase acrA and the nonribosomal peptide synthetase acrB are collectively responsible for the synthesis of the acurin A core structure with a heptaketide backbone produced by acrA covalently fused to a L-serine by acrB. After the formation of the PK-NRP hybrid product, it is detached from acrB by reductive release to set up the formation of the lactam ring by aldol condensation. The hydrolyase acrC then catalyzes water loss to generate a double bond in the ring. This double bond is probably reduced, which is followed by three oxidations at C-22 to generate the carboxylic acid moiety, involving probably the FAD-binding monooxygenase acrE and the cytochrome P450 monooxygenases acrD and acrF. Finally, a last methylation step performed by the O-methyltransferase acrG leads to the production of acurin A. This chain is Hydrolase acrC, found in Aspergillus aculeatus (strain ATCC 16872 / CBS 172.66 / WB 5094).